We begin with the raw amino-acid sequence, 745 residues long: 1,4-alpha-glucan branching enzyme GlgB (745 aa).

Asp416 acts as the Nucleophile in catalysis. Glu469 functions as the Proton donor in the catalytic mechanism.

This sequence belongs to the glycosyl hydrolase 13 family. GlgB subfamily. In terms of assembly, monomer.

The catalysed reaction is Transfers a segment of a (1-&gt;4)-alpha-D-glucan chain to a primary hydroxy group in a similar glucan chain.. Its pathway is glycan biosynthesis; glycogen biosynthesis. Its function is as follows. Catalyzes the formation of the alpha-1,6-glucosidic linkages in glycogen by scission of a 1,4-alpha-linked oligosaccharide from growing alpha-1,4-glucan chains and the subsequent attachment of the oligosaccharide to the alpha-1,6 position. This chain is 1,4-alpha-glucan branching enzyme GlgB, found in Shewanella sp. (strain MR-4).